Consider the following 196-residue polypeptide: Translation machinery-associated protein 22 (196 aa).

Positions 111-182 constitute an SUI1 domain; sequence IIIKRIERNK…EAKEYIEKLL (72 aa).

It belongs to the DENR family. Interacts with the 40S ribosomal subunit.

It is found in the cytoplasm. The chain is Translation machinery-associated protein 22 (TMA22) from Lodderomyces elongisporus (strain ATCC 11503 / CBS 2605 / JCM 1781 / NBRC 1676 / NRRL YB-4239) (Yeast).